The sequence spans 223 residues: Phosphoribosylformylglycinamidine synthase subunit PurQ (223 aa).

The region spanning 4 to 223 is the Glutamine amidotransferase type-1 domain; the sequence is RIGVITFPGT…FQSVLSTLVS (220 aa). The active-site Nucleophile is the C87. Catalysis depends on residues H195 and E197.

As to quaternary structure, part of the FGAM synthase complex composed of 1 PurL, 1 PurQ and 2 PurS subunits.

It is found in the cytoplasm. The catalysed reaction is N(2)-formyl-N(1)-(5-phospho-beta-D-ribosyl)glycinamide + L-glutamine + ATP + H2O = 2-formamido-N(1)-(5-O-phospho-beta-D-ribosyl)acetamidine + L-glutamate + ADP + phosphate + H(+). It catalyses the reaction L-glutamine + H2O = L-glutamate + NH4(+). It participates in purine metabolism; IMP biosynthesis via de novo pathway; 5-amino-1-(5-phospho-D-ribosyl)imidazole from N(2)-formyl-N(1)-(5-phospho-D-ribosyl)glycinamide: step 1/2. In terms of biological role, part of the phosphoribosylformylglycinamidine synthase complex involved in the purines biosynthetic pathway. Catalyzes the ATP-dependent conversion of formylglycinamide ribonucleotide (FGAR) and glutamine to yield formylglycinamidine ribonucleotide (FGAM) and glutamate. The FGAM synthase complex is composed of three subunits. PurQ produces an ammonia molecule by converting glutamine to glutamate. PurL transfers the ammonia molecule to FGAR to form FGAM in an ATP-dependent manner. PurS interacts with PurQ and PurL and is thought to assist in the transfer of the ammonia molecule from PurQ to PurL. The sequence is that of Phosphoribosylformylglycinamidine synthase subunit PurQ from Corynebacterium jeikeium (strain K411).